A 299-amino-acid polypeptide reads, in one-letter code: Tyrosine recombinase XerD (299 aa).

A Core-binding (CB) domain is found at 2 to 89; the sequence is ETVNNNLQQF…AIRSFHQFLL (88 aa). Positions 110 to 293 constitute a Tyr recombinase domain; the sequence is RLPKALTIEE…TKTRMRDVYA (184 aa). Residues Arg150, Lys174, His245, Arg248, and His271 contribute to the active site. Tyr280 (O-(3'-phospho-DNA)-tyrosine intermediate) is an active-site residue.

The protein belongs to the 'phage' integrase family. XerD subfamily. In terms of assembly, forms a cyclic heterotetrameric complex composed of two molecules of XerC and two molecules of XerD.

Its subcellular location is the cytoplasm. Site-specific tyrosine recombinase, which acts by catalyzing the cutting and rejoining of the recombining DNA molecules. The XerC-XerD complex is essential to convert dimers of the bacterial chromosome into monomers to permit their segregation at cell division. It also contributes to the segregational stability of plasmids. This Halalkalibacterium halodurans (strain ATCC BAA-125 / DSM 18197 / FERM 7344 / JCM 9153 / C-125) (Bacillus halodurans) protein is Tyrosine recombinase XerD.